The following is a 548-amino-acid chain: Myrosinase (548 aa).

The first 20 residues, 1 to 20 (MKLLHGLALVFLLAAASCKA), serve as a signal peptide directing secretion. 3 disulfides stabilise this stretch: cysteine 26–cysteine 458, cysteine 34–cysteine 454, and cysteine 226–cysteine 236. Glutamine 59 serves as a coordination point for substrate. Zn(2+) contacts are provided by histidine 76 and aspartate 90. N-linked (GlcNAc...) asparagine glycosylation occurs at asparagine 110. Positions 161 and 206 each coordinate substrate. Glutamine 207 provides a ligand contact to L-ascorbate. A glycan (N-linked (GlcNAc...) asparagine) is linked at asparagine 240. Arginine 281 provides a ligand contact to L-ascorbate. Asparagine 331 carries N-linked (GlcNAc...) asparagine glycosylation. Residue tyrosine 352 coordinates substrate. Catalysis depends on glutamate 429, which acts as the Nucleophile. Residues tryptophan 477 and 484–485 (EF) contribute to the substrate site. The N-linked (GlcNAc...) asparagine glycan is linked to asparagine 520.

This sequence belongs to the glycosyl hydrolase 1 family. Homodimer. In vacuoles called myrosin grains of a certain class of cells, myrosin cells, distributed in the cotyledons and the axis of the embryo as well as in different organs of the growing plant.

It localises to the vacuole. The catalysed reaction is a thioglucoside + H2O = a sugar + a thiol.. Degradation of glucosinolates (glucose residue linked by a thioglucoside bound to an amino acid derivative) to glucose, sulfate and any of the products: thiocyanates, isothiocyanates, nitriles, epithionitriles or oxazolidine-2-thiones. This Brassica napus (Rape) protein is Myrosinase.